Here is a 521-residue protein sequence, read N- to C-terminus: uncharacterized protein (521 aa).

The segment at 1–25 (MLQRSLGVNGRKLAMSARSAKRERK) is disordered. Transmembrane regions (helical) follow at residues 68–88 (GAVW…GAVL), 114–134 (VLIV…SLTV), 160–180 (VVLA…HTVG), 192–212 (VAVT…IYFL), 290–310 (ALLV…GWCW), and 399–419 (LLFW…CAQI).

It localises to the cell membrane. This is an uncharacterized protein from Mycobacterium tuberculosis (strain CDC 1551 / Oshkosh).